The primary structure comprises 399 residues: DNA replication and repair protein RecF (399 aa).

30–37 (GSNGIGKT) provides a ligand contact to ATP.

It belongs to the RecF family.

The protein resides in the cytoplasm. Its function is as follows. The RecF protein is involved in DNA metabolism; it is required for DNA replication and normal SOS inducibility. RecF binds preferentially to single-stranded, linear DNA. It also seems to bind ATP. In Paenarthrobacter aurescens (strain TC1), this protein is DNA replication and repair protein RecF.